The following is a 105-amino-acid chain: U21-theraphotoxin-Cg1a 4 (105 aa).

The N-terminal stretch at 1–21 (MKVSVLITLAVLGVMFLLTSA) is a signal peptide. A propeptide spanning residues 22–48 (EERGSDQMDSPAWLKSMEIIFQSEERE) is cleaved from the precursor. 3 cysteine pairs are disulfide-bonded: Cys49-Cys63, Cys56-Cys68, and Cys62-Cys76. Val82 carries the valine amide modification. The propeptide occupies 83–105 (GKWEMLINMNIFRIVFSYSMCTV).

This sequence belongs to the neurotoxin 10 (Hwtx-1) family. 05 (F4a) subfamily. Expressed by the venom gland.

Its subcellular location is the secreted. Functionally, probable ion channel inhibitor. The chain is U21-theraphotoxin-Cg1a 4 from Chilobrachys guangxiensis (Chinese earth tiger tarantula).